The primary structure comprises 225 residues: Protein-L-isoaspartate O-methyltransferase (225 aa).

Ser-75 is an active-site residue.

Belongs to the methyltransferase superfamily. L-isoaspartyl/D-aspartyl protein methyltransferase family.

The protein resides in the cytoplasm. The catalysed reaction is [protein]-L-isoaspartate + S-adenosyl-L-methionine = [protein]-L-isoaspartate alpha-methyl ester + S-adenosyl-L-homocysteine. Catalyzes the methyl esterification of L-isoaspartyl residues in peptides and proteins that result from spontaneous decomposition of normal L-aspartyl and L-asparaginyl residues. It plays a role in the repair and/or degradation of damaged proteins. The sequence is that of Protein-L-isoaspartate O-methyltransferase from Xanthomonas euvesicatoria pv. vesicatoria (strain 85-10) (Xanthomonas campestris pv. vesicatoria).